The primary structure comprises 365 residues: 4-hydroxy-3-methylbut-2-en-1-yl diphosphate synthase (flavodoxin) (365 aa).

Positions 270, 273, 305, and 312 each coordinate [4Fe-4S] cluster.

This sequence belongs to the IspG family. Requires [4Fe-4S] cluster as cofactor.

The enzyme catalyses (2E)-4-hydroxy-3-methylbut-2-enyl diphosphate + 2 oxidized [2Fe-2S]-[ferredoxin] + H2O = 2-C-methyl-D-erythritol 2,4-cyclic diphosphate + 2 reduced [2Fe-2S]-[ferredoxin] + H(+). It carries out the reaction (2E)-4-hydroxy-3-methylbut-2-enyl diphosphate + oxidized [flavodoxin] + H2O + 2 H(+) = 2-C-methyl-D-erythritol 2,4-cyclic diphosphate + reduced [flavodoxin]. It participates in isoprenoid biosynthesis; isopentenyl diphosphate biosynthesis via DXP pathway; isopentenyl diphosphate from 1-deoxy-D-xylulose 5-phosphate: step 5/6. Functionally, converts 2C-methyl-D-erythritol 2,4-cyclodiphosphate (ME-2,4cPP) into 1-hydroxy-2-methyl-2-(E)-butenyl 4-diphosphate. Involved in density-dependent regulation of 2'-N-acetyltransferase. This is 4-hydroxy-3-methylbut-2-en-1-yl diphosphate synthase (flavodoxin) from Providencia stuartii.